The sequence spans 119 residues: Circadian clock oscillator protein KaiB (119 aa).

Belongs to the KaiB family. May undergo a major conformational rearrangment; in the free state forms homooligomers. When bound to KaiC switches to a monomeric thioredoxin-fold (KaiB(fs)). The active oscillator complex is probably KaiC(6):KaiB(6).

In terms of biological role, component of the KaiBC clock protein complex, which constitutes the main circadian regulator in cyanobacteria; it may modify the ATPase activity of KaiC. Its function is as follows. May be a metamorphic protein which reversibly switches between an inactive tetrameric fold and a rare, thioredoxin-like monomeric fold (KaiB(fs)). KaiB(fs) binds phospho-KaiC, and perhaps clock output effectors. The polypeptide is Circadian clock oscillator protein KaiB (Prochlorococcus marinus (strain MIT 9303)).